Here is a 334-residue protein sequence, read N- to C-terminus: Glycerol-1-phosphate dehydrogenase [NAD(P)+] (334 aa).

NAD(+)-binding positions include Gly77–Asp81 and Thr99–Ser102. Position 104 (Asp104) interacts with substrate. Ser108 contributes to the NAD(+) binding site. Asp147 is a binding site for substrate. Residues Asp147 and His225 each coordinate Zn(2+). Substrate is bound at residue His229. His246 lines the Zn(2+) pocket.

It belongs to the glycerol-1-phosphate dehydrogenase family. Zn(2+) serves as cofactor.

The protein resides in the cytoplasm. The enzyme catalyses sn-glycerol 1-phosphate + NAD(+) = dihydroxyacetone phosphate + NADH + H(+). It catalyses the reaction sn-glycerol 1-phosphate + NADP(+) = dihydroxyacetone phosphate + NADPH + H(+). It participates in membrane lipid metabolism; glycerophospholipid metabolism. Functionally, catalyzes the NAD(P)H-dependent reduction of dihydroxyacetonephosphate (DHAP or glycerone phosphate) to glycerol 1-phosphate (G1P). The G1P thus generated is used as the glycerophosphate backbone of phospholipids in the cellular membranes of Archaea. This Methanococcus maripaludis (strain C6 / ATCC BAA-1332) protein is Glycerol-1-phosphate dehydrogenase [NAD(P)+].